A 157-amino-acid polypeptide reads, in one-letter code: Protein Smg homolog (157 aa).

Belongs to the Smg family.

The chain is Protein Smg homolog from Shewanella frigidimarina (strain NCIMB 400).